The sequence spans 77 residues: Acyl carrier protein (77 aa).

A Carrier domain is found at Met-1–Lys-76. Ser-36 bears the O-(pantetheine 4'-phosphoryl)serine mark.

The protein belongs to the acyl carrier protein (ACP) family. Post-translationally, 4'-phosphopantetheine is transferred from CoA to a specific serine of apo-ACP by AcpS. This modification is essential for activity because fatty acids are bound in thioester linkage to the sulfhydryl of the prosthetic group.

It is found in the cytoplasm. It functions in the pathway lipid metabolism; fatty acid biosynthesis. In terms of biological role, carrier of the growing fatty acid chain in fatty acid biosynthesis. The protein is Acyl carrier protein of Leptospira biflexa serovar Patoc (strain Patoc 1 / Ames).